A 147-amino-acid polypeptide reads, in one-letter code: Hemoglobin subunit beta (147 aa).

Val2 bears the N-acetylvaline mark. The 145-residue stretch at 3–147 folds into the Globin domain; the sequence is HMSAEEKGIV…VAAALAHKYH (145 aa). The residue at position 13 (Thr13) is a Phosphothreonine. Phosphoserine is present on Ser45. N6-acetyllysine is present on Lys60. Heme b is bound at residue His64. At Lys83 the chain carries N6-acetyllysine. His93 lines the heme b pocket. Residue Cys94 is modified to S-nitrosocysteine. Position 145 is an N6-acetyllysine (Lys145).

Belongs to the globin family. In terms of assembly, heterotetramer of two alpha chains and two beta chains. In terms of tissue distribution, red blood cells.

Functionally, involved in oxygen transport from the lung to the various peripheral tissues. In Scalopus aquaticus (Eastern mole), this protein is Hemoglobin subunit beta (HBB).